Here is a 356-residue protein sequence, read N- to C-terminus: D-alanine--D-alanine ligase (356 aa).

One can recognise an ATP-grasp domain in the interval 134–339; it reads KQLFEHRGLP…YPELITKLIE (206 aa). 167-222 is an ATP binding site; it reads NDKLNYPVFVKPANLGSSVGISKCNNEAELKEGIKEAFQFDRKLVIEQGVNAREIE. Residues aspartate 293, glutamate 306, and asparagine 308 each coordinate Mg(2+).

Belongs to the D-alanine--D-alanine ligase family. It depends on Mg(2+) as a cofactor. Mn(2+) serves as cofactor.

Its subcellular location is the cytoplasm. The catalysed reaction is 2 D-alanine + ATP = D-alanyl-D-alanine + ADP + phosphate + H(+). The protein operates within cell wall biogenesis; peptidoglycan biosynthesis. In terms of biological role, cell wall formation. The protein is D-alanine--D-alanine ligase of Staphylococcus aureus (strain Mu3 / ATCC 700698).